Here is a 256-residue protein sequence, read N- to C-terminus: uncharacterized protein (256 aa).

A signal peptide spans 1-22 (MGYLKRFALYISVMILIFAIAG). C23 carries N-palmitoyl cysteine lipidation. C23 carries S-diacylglycerol cysteine lipidation.

It belongs to the staphylococcal tandem lipoprotein family.

Its subcellular location is the cell membrane. This is an uncharacterized protein from Staphylococcus aureus (strain COL).